Here is a 272-residue protein sequence, read N- to C-terminus: Large ribosomal subunit protein uL2 (272 aa).

Residues 222 to 272 (GTAMNPVDHPHGGGEGRNFGKHPVSPWGKKTKGKKTRNNRLTDKFIVHRRS) form a disordered region. Residues 250 to 259 (KKTKGKKTRN) show a composition bias toward basic residues. A compositionally biased stretch (basic and acidic residues) spans 261–272 (RLTDKFIVHRRS).

It belongs to the universal ribosomal protein uL2 family. As to quaternary structure, part of the 50S ribosomal subunit. Forms a bridge to the 30S subunit in the 70S ribosome.

Functionally, one of the primary rRNA binding proteins. Required for association of the 30S and 50S subunits to form the 70S ribosome, for tRNA binding and peptide bond formation. It has been suggested to have peptidyltransferase activity; this is somewhat controversial. Makes several contacts with the 16S rRNA in the 70S ribosome. In Baumannia cicadellinicola subsp. Homalodisca coagulata, this protein is Large ribosomal subunit protein uL2.